Here is a 382-residue protein sequence, read N- to C-terminus: Mannitol-1-phosphate 5-dehydrogenase (382 aa).

NAD(+) is bound at residue 3-14 (AVHFGAGNIGRG).

The protein belongs to the mannitol dehydrogenase family.

The catalysed reaction is D-mannitol 1-phosphate + NAD(+) = beta-D-fructose 6-phosphate + NADH + H(+). This chain is Mannitol-1-phosphate 5-dehydrogenase, found in Exiguobacterium sp. (strain ATCC BAA-1283 / AT1b).